A 233-amino-acid chain; its full sequence is MASSSDPWMREYNEALKLSEDINGMMSERNASGLTGPDAQRRASAIRRKITILGTRLDSLQSLLVKVPGKQHVSEKEMNRRKDMVGNLRSKTNQVASALNMSNFANRDSLFGTDLKPDDAINRVSGMDNQGIVVFQRQVMREQDEGLEKLEETVMSTKHIALAVNEELTLQTRLIDDLDYDVDITDSRLRRVQKSLALMNKSMKSGCSCMSMLLSVLGIVGLALVIWLLVKYL.

At 1–209 (MASSSDPWMR…NKSMKSGCSC (209 aa)) the chain is on the cytoplasmic side. Positions 137–199 (RQVMREQDEG…RRVQKSLALM (63 aa)) constitute a t-SNARE coiled-coil homology domain. A helical; Anchor for type IV membrane protein transmembrane segment spans residues 210–230 (MSMLLSVLGIVGLALVIWLLV). Over 231-233 (KYL) the chain is Vesicular.

Belongs to the syntaxin family. In terms of assembly, interacts either with VTI11 and SYP21, or with VTI11 and SYP22 in the prevacuolar compartment, or with VTI12 and SYP61 in the trans-Golgi network to form t-SNARE complexes. Expressed in root, leaf, stem, flower and silique.

The protein resides in the golgi apparatus. The protein localises to the trans-Golgi network membrane. Its subcellular location is the prevacuolar compartment membrane. Vesicle trafficking protein that functions in the secretory pathway. The sequence is that of Syntaxin-52 (SYP52) from Arabidopsis thaliana (Mouse-ear cress).